We begin with the raw amino-acid sequence, 1676 residues long: DNA-directed RNA polymerase subunit beta'-beta'' (1676 aa).

Residues 1–582 (MCDAIQIRLA…FLKTTPGRII (582 aa)) are DNA-directed RNA polymerase subunit beta'. 4 residues coordinate Zn(2+): Cys-64, Cys-66, Cys-79, and Cys-82. Asp-454, Asp-456, and Asp-458 together coordinate Mg(2+). The segment at 583-1676 (FYQQAAYHVG…IPAGTGAKYL (1094 aa)) is DNA-directed RNA polymerase subunit beta''. Zn(2+)-binding residues include Cys-804, Cys-859, Cys-866, and Cys-869.

In the N-terminal section; belongs to the RNA polymerase beta' chain family. RpoC1 subfamily. This sequence in the C-terminal section; belongs to the RNA polymerase beta' chain family. RpoC2 subfamily. As to quaternary structure, in plastids the minimal PEP RNA polymerase catalytic core is composed of four subunits: alpha, beta, beta', and beta''. When a (nuclear-encoded) sigma factor is associated with the core the holoenzyme is formed, which can initiate transcription. Beta' and beta'' are fused in this algae. Mg(2+) is required as a cofactor. The cofactor is Zn(2+).

The protein localises to the plastid. It localises to the chloroplast. The enzyme catalyses RNA(n) + a ribonucleoside 5'-triphosphate = RNA(n+1) + diphosphate. Its function is as follows. DNA-dependent RNA polymerase catalyzes the transcription of DNA into RNA using the four ribonucleoside triphosphates as substrates. The chain is DNA-directed RNA polymerase subunit beta'-beta'' from Cyanidioschyzon merolae (strain NIES-3377 / 10D) (Unicellular red alga).